A 310-amino-acid chain; its full sequence is HTH-type transcriptional activator TtdR (310 aa).

The HTH lysR-type domain maps to 6–63; it reads PLAKDLQVLVEIVHSGSFSAAAATLGQTPAFVTKRIQILENTLATTLLNRSARGVALT. The H-T-H motif DNA-binding region spans 23–42; the sequence is FSAAAATLGQTPAFVTKRIQ.

This sequence belongs to the LysR transcriptional regulatory family.

Positive regulator required for L-tartrate-dependent anaerobic growth on glycerol. Induces expression of the ttdA-ttdB-ygjE operon. The sequence is that of HTH-type transcriptional activator TtdR (ttdR) from Escherichia coli (strain K12).